The chain runs to 519 residues: NADH-quinone oxidoreductase subunit N (519 aa).

Helical transmembrane passes span 22 to 42 (LLPMLIVFGVACAGVLVEAFV), 53 to 73 (VLALGGLVAALIAVVSNTGLP), 87 to 107 (PTLFIQGTILALSIGALLLIA), 141 to 161 (TEVFPLAMFAVGGMMLFPAAN), 163 to 183 (LITAFVALEVLSLPLYLLAGM), 198 to 218 (YFLLGAFSSAFFVYGLALVYG), 242 to 262 (IIVGLALIGISLLFKLSGVPF), 287 to 307 (VAAFGALLRVFFVAFGGLAWD), 310 to 330 (PVIWGVAIATMVVGAILGITQ), 336 to 356 (LLAYSSIAHAGFVLTAFAATT), 363 to 383 (VLFYLVAYGFMTIGAFAIVIL), 406 to 426 (LVAGIFALFLLAMAGLPPTSG), 442 to 461 (AGPLVIVGVLASAVTAYYYL), and 483 to 503 (GALASAAIALGVIVTVVLGIV).

It belongs to the complex I subunit 2 family. NDH-1 is composed of 14 different subunits. Subunits NuoA, H, J, K, L, M, N constitute the membrane sector of the complex.

Its subcellular location is the cell membrane. It carries out the reaction a quinone + NADH + 5 H(+)(in) = a quinol + NAD(+) + 4 H(+)(out). Functionally, NDH-1 shuttles electrons from NADH, via FMN and iron-sulfur (Fe-S) centers, to quinones in the respiratory chain. The immediate electron acceptor for the enzyme in this species is believed to be a menaquinone. Couples the redox reaction to proton translocation (for every two electrons transferred, four hydrogen ions are translocated across the cytoplasmic membrane), and thus conserves the redox energy in a proton gradient. The sequence is that of NADH-quinone oxidoreductase subunit N from Acidothermus cellulolyticus (strain ATCC 43068 / DSM 8971 / 11B).